We begin with the raw amino-acid sequence, 274 residues long: Large ribosomal subunit protein uL2cz/uL2cy (274 aa).

Disordered stretches follow at residues 1 to 21 (MAIH…VDSQ) and 224 to 274 (NPVD…RRSK).

It belongs to the universal ribosomal protein uL2 family. As to quaternary structure, part of the 50S ribosomal subunit.

Its subcellular location is the plastid. It localises to the chloroplast. The sequence is that of Large ribosomal subunit protein uL2cz/uL2cy (rpl2-A) from Populus trichocarpa (Western balsam poplar).